The chain runs to 180 residues: ATP-dependent protease subunit HslV (180 aa).

The active site involves Thr-7. Gly-163, Cys-166, and Thr-169 together coordinate Na(+).

The protein belongs to the peptidase T1B family. HslV subfamily. A double ring-shaped homohexamer of HslV is capped on each side by a ring-shaped HslU homohexamer. The assembly of the HslU/HslV complex is dependent on binding of ATP.

Its subcellular location is the cytoplasm. It catalyses the reaction ATP-dependent cleavage of peptide bonds with broad specificity.. With respect to regulation, allosterically activated by HslU binding. In terms of biological role, protease subunit of a proteasome-like degradation complex believed to be a general protein degrading machinery. This chain is ATP-dependent protease subunit HslV, found in Alcanivorax borkumensis (strain ATCC 700651 / DSM 11573 / NCIMB 13689 / SK2).